A 485-amino-acid chain; its full sequence is MKRLRPSDKFFELLGYKPHHVQLAIHRSTAKRRVACLGRQSGKSEAASVEAVFELFARPGSQGWIIAPTYDQAEIIFGRVVEKVERLSEVFPTTEVQLQRRRLRLLVHHYDRPVNAPGAKRVATSEFRGKSADRPDNLRGATLDFVILDEAAMIPFSVWSEAIEPTLSVRDGWALIISTPKGLNWFYEFFLMGWRGGLKEGIPNSGINQTHPDFESFHAASWDVWPERREWYMERRLYIPDLEFRQEYGAEFVSHSNSVFSGLDMLILLPYERRGTRLVVEDYRPDHIYCIGADFGKNQDYSVFSVLDLDTGAIACLERMNGATWSDQVARLKALSEDYGHAYVVADTWGVGDAIAEELDAQGINYTPLPVKSSSVKEQLISNLALLMEKGQVAVPNDKTILDELRNFRYYRTASGNQVMRAYGRGHDDIVMSLALAYSQYEGKDGYKFELAEERPSKLKHEESVMSLVEDDFTDLELANRAFSA.

2 residues coordinate ATP: Gln-97 and Gln-99. The Walker A motif motif lies at Thr-124–Ser-131. Residues Phe-145–Glu-150 carry the Walker B motif motif. Residue Glu-150 is the For ATPase activity of the active site. The segment at Ser-256–Tyr-438 is nuclease. Mg(2+) is bound by residues Asp-294, Asp-347, and Asp-429.

Belongs to the Tequatrovirus large terminase family. In terms of assembly, interacts with the terminase small subunit; the active complex is probably heterooligomeric. Interacts with the portal protein. The cofactor is Mg(2+).

Functionally, the terminase large subunit acts as an ATP driven molecular motor necessary for viral DNA translocation into empty capsids and as an endonuclease that cuts the viral genome to initiate and to end a packaging reaction The terminase lies at a unique vertex of the procapsid and is composed of two subunits, a small terminase subunit involved in viral DNA recognition (packaging sequence), and a large terminase subunit possessing endonucleolytic and ATPase activities. Both terminase subunits heterooligomerize and are docked on the portal protein to form the packaging machine. The terminase large subunit exhibits endonuclease activity and cleaves the viral genome concatemer. Once the capsid is packaged with the DNA, the terminase complex is substituted by the tail. The protein is Terminase, large subunit of Thermus thermophilus (Thermus thermophilus phage G20c).